The following is a 235-amino-acid chain: MKVIKVENQVQGGKVAFEILKEKLANGAQTLGLATGSSPLEFYKEIVESDLDFSNLTSVNLDEYVGLDGDNPQSYRYFMQENLFNQKPFKESFLPRGVKDNAEAEVERYNQILADHPVDLQILGIGRNGHIGFNEPGTPFDSQTHLVELDQSTIEANARFFAKIEDVPTQAISMGIKNILDAKSIILFAYGESKAEAIAGTVSGPVTENLPASSLQNHPDVTIIADAEALSLLEK.

Asp-62 (proton acceptor; for enolization step) is an active-site residue. Residue Asn-128 is the For ring-opening step of the active site. His-130 acts as the Proton acceptor; for ring-opening step in catalysis. Catalysis depends on Glu-135, which acts as the For ring-opening step.

It belongs to the glucosamine/galactosamine-6-phosphate isomerase family. NagB subfamily.

It carries out the reaction alpha-D-glucosamine 6-phosphate + H2O = beta-D-fructose 6-phosphate + NH4(+). It participates in amino-sugar metabolism; N-acetylneuraminate degradation; D-fructose 6-phosphate from N-acetylneuraminate: step 5/5. Catalyzes the reversible isomerization-deamination of glucosamine 6-phosphate (GlcN6P) to form fructose 6-phosphate (Fru6P) and ammonium ion. The chain is Glucosamine-6-phosphate deaminase from Streptococcus pneumoniae (strain JJA).